A 67-amino-acid chain; its full sequence is MPKMKTKSSAKKRFKITATGKVRAAAAGKRHGMIKRSNKFIRDARGTMVLAEPDGKKVVKNYLPNGL.

The protein belongs to the bacterial ribosomal protein bL35 family.

The protein is Large ribosomal subunit protein bL35 of Sinorhizobium medicae (strain WSM419) (Ensifer medicae).